Consider the following 139-residue polypeptide: Large ribosomal subunit protein uL16 (139 aa).

The protein belongs to the universal ribosomal protein uL16 family. Part of the 50S ribosomal subunit.

In terms of biological role, binds 23S rRNA and is also seen to make contacts with the A and possibly P site tRNAs. This Gloeothece citriformis (strain PCC 7424) (Cyanothece sp. (strain PCC 7424)) protein is Large ribosomal subunit protein uL16.